The primary structure comprises 385 residues: 8-amino-7-oxononanoate synthase (385 aa).

Residue Arg21 coordinates substrate. Residue Gly108–Phe109 participates in pyridoxal 5'-phosphate binding. His133 is a substrate binding site. Positions 179, 207, and 233 each coordinate pyridoxal 5'-phosphate. N6-(pyridoxal phosphate)lysine is present on Lys236. Thr352 contributes to the substrate binding site.

The protein belongs to the class-II pyridoxal-phosphate-dependent aminotransferase family. BioF subfamily. As to quaternary structure, homodimer. Pyridoxal 5'-phosphate serves as cofactor.

It catalyses the reaction 6-carboxyhexanoyl-[ACP] + L-alanine + H(+) = (8S)-8-amino-7-oxononanoate + holo-[ACP] + CO2. It functions in the pathway cofactor biosynthesis; biotin biosynthesis. Catalyzes the decarboxylative condensation of pimeloyl-[acyl-carrier protein] and L-alanine to produce 8-amino-7-oxononanoate (AON), [acyl-carrier protein], and carbon dioxide. The sequence is that of 8-amino-7-oxononanoate synthase from Klebsiella pneumoniae subsp. pneumoniae (strain ATCC 700721 / MGH 78578).